A 684-amino-acid chain; its full sequence is MSAIPAEESDQLLIRPLGAGQEVGRSCIILEFKGRKIMLDCGIHPGLEGMDALPYIDLIDPAEIDLLLISHFHLDHCGALPWFLQKTSFKGRTFMTHATKAIYRWLLSDYVKVSNISADDMLYTETDLEESMDKIETINFHEVKEVAGIKFWCYHAGHVLGAAMFMIEIAGVKLLYTGDFSRQEDRHLMAAEIPNIKPDILIIESTYGTHIHEKREEREARFCNTVHDIVNRGGRGLIPVFALGRAQELLLILDEYWQNHPELHDIPIYYASSLAKKCMAVYQTYVNAMNDKIRKQININNPFVFKHISNLKSMDHFDDIGPSVVMASPGMIQNGLSRELFESWCTDKRNGVIIAGYCVEGTLAKHIMSEPEEITTMSGQKLPLKMSVDYISFSAHTDYQQTSEFIRALKPPHVILVHGEQNEMARLKAALIREYEDNDEVHIEVHNPRNTEAVTLNFRGEKLAKVMGFLADKKPEQGQRVSGILVKRNFNYHILSPCDLSNYTDLAMSTVKQTQAIPYTGPFYLLYYQLQKLTGDVEELEIQEKPALKVFKSITVVQEPGMVVLEWLANPSNDMYADTVTTVILEVQSNPKIRKGAVQKVSKKLEMHVYSKRLEVMLQDIFGEDCVSVKDDSVLSVTVDGKTANINLETRAVECEEGSEDDESLREMVELAAQRLYEALTPVH.

S2 carries the post-translational modification N-acetylserine. The Zn(2+) site is built by H71, H73, D75, H76, H158, and D179. Catalysis depends on H396, which acts as the Proton donor. Zn(2+) is bound at residue H418. Residues K462, K465, and K545 each participate in a glycyl lysine isopeptide (Lys-Gly) (interchain with G-Cter in SUMO) cross-link. S659 bears the Phosphoserine mark. Position 681 is a phosphothreonine (T681).

This sequence belongs to the metallo-beta-lactamase superfamily. RNA-metabolizing metallo-beta-lactamase-like family. CPSF3 subfamily. As to quaternary structure, component of the cleavage and polyadenylation specificity factor (CPSF) complex, composed of CPSF1, CPSF2, CPSF3, CPSF4 and FIP1L1. Interacts with CPSF2, CSTF2 and SYMPK. Interacts with TUT1; the interaction is direct and mediates the recruitment of the CPSF complex on the 3'UTR of pre-mRNAs. Interacts with WDR33. Interacts with ZC3H3. Interacts with ISY1; this interaction is in an RNA independent manner. Interacts with the microprocessor complex subunits DGCR8 and DROSHA; this interaction is in an RNA dependent manner. Zn(2+) is required as a cofactor. In terms of processing, sumoylated on Lys-462, Lys-465 and Lys-545, preferentially by SUMO3.

The protein localises to the nucleus. In terms of biological role, component of the cleavage and polyadenylation specificity factor (CPSF) complex that plays a key role in pre-mRNA 3'-end formation, recognizing the AAUAAA signal sequence and interacting with poly(A) polymerase and other factors to bring about cleavage and poly(A) addition. Has endonuclease activity, and functions as an mRNA 3'-end-processing endonuclease. Also involved in the histone 3'-end pre-mRNA processing. U7 snRNP-dependent protein that induces both the 3' endoribonucleolytic cleavage of histone pre-mRNAs and acts as a 5' to 3' exonuclease for degrading the subsequent downstream cleavage product (DCP) of mature histone mRNAs. Cleavage occurs after the 5'-ACCCA-3' sequence in the histone pre-mRNA leaving a 3'hydroxyl group on the upstream fragment containing the stem loop (SL) and 5' phosphate on the downstream cleavage product (DCP) starting with CU nucleotides. The U7-dependent 5' to 3' exonuclease activity is processive and degrades the DCP RNA substrate even after complete removal of the U7-binding site. Binds to the downstream cleavage product (DCP) of histone pre-mRNAs and the cleaved DCP RNA substrate in a U7 snRNP dependent manner. Required for the selective processing of microRNAs (miRNAs) during embryonic stem cell differentiation via its interaction with ISY1. Required for entering/progressing through S-phase of the cell cycle. Required for the biogenesis of all miRNAs from the pri-miR-17-92 primary transcript except miR-92a. Only required for the biogenesis of miR-290 and miR-96 from the pri-miR-290-295 and pri-miR-96-183 primary transcripts, respectively. The chain is Cleavage and polyadenylation specificity factor subunit 3 (Cpsf3) from Mus musculus (Mouse).